We begin with the raw amino-acid sequence, 170 residues long: Small ribosomal subunit protein uS15 (170 aa).

The span at 1–10 shows a compositional bias: basic residues; the sequence is MARMHSRKKG. Residues 1–20 are disordered; the sequence is MARMHSRKKGSSGSRPPVVD.

It belongs to the universal ribosomal protein uS15 family. As to quaternary structure, part of the 30S ribosomal subunit.

The polypeptide is Small ribosomal subunit protein uS15 (Methanothrix thermoacetophila (strain DSM 6194 / JCM 14653 / NBRC 101360 / PT) (Methanosaeta thermophila)).